Reading from the N-terminus, the 91-residue chain is Small ribosomal subunit protein bS18 (91 aa).

This sequence belongs to the bacterial ribosomal protein bS18 family. In terms of assembly, part of the 30S ribosomal subunit. Forms a tight heterodimer with protein bS6.

Binds as a heterodimer with protein bS6 to the central domain of the 16S rRNA, where it helps stabilize the platform of the 30S subunit. This Burkholderia vietnamiensis (strain G4 / LMG 22486) (Burkholderia cepacia (strain R1808)) protein is Small ribosomal subunit protein bS18.